The primary structure comprises 1107 residues: Miniconductance mechanosensitive channel MscM (1107 aa).

The signal sequence occupies residues 1–19 (MRLIITFLMAWCLSWGAYA). A run of 11 helical transmembrane segments spans residues 467-487 (VMML…ILVG), 522-542 (LFWS…LGYG), 551-571 (LAVA…VVMI), 600-620 (YLMS…FDNL), 628-648 (SLGR…TLSL), 674-694 (MMIG…LATA), 698-718 (LARL…YHVI), 785-805 (ILML…HSAF), 828-848 (PITL…TQLV), 875-895 (TITK…MIGI), and 910-930 (GLGF…IILF).

This sequence belongs to the MscS (TC 1.A.23) family. In terms of assembly, homoheptamer.

The protein resides in the cell inner membrane. Mechanosensitive channel that protects cells against hypoosmotic stress when highly overexpressed. Gates spontaneously in response to increased membrane tension. This Escherichia coli (strain K12) protein is Miniconductance mechanosensitive channel MscM (mscM).